The primary structure comprises 295 residues: MSKIPSVNIKELLDAGVHFGHKTSRWNPKMGSYIYGERDDVHIIDLRQSAVLMSVALNAIYETVKKDGKILFVSTKIQASDIIAEYAEKCGQYYVNHRWLGGMLTNWKTIAGSIEKLNKLEKTLGNEEALMGYTKKEILDMSRKKDKLLLSLAGIRNLNSKPDLLVVIDTNKEHIAINEAVKLNVPIVAVVDTNSNPDNVDYPIPGNDDSIRSIRLYCSLFADAALQGLAESMKASGVDMGAIQEHTDKALTSKSVSKLKQTKKFSKMKNIDEETNTEFEQALNDADKNKNSENA.

This sequence belongs to the universal ribosomal protein uS2 family.

This chain is Small ribosomal subunit protein uS2, found in Rickettsia canadensis (strain McKiel).